The following is a 606-amino-acid chain: Radial spoke head protein 3 homolog (606 aa).

Residues 1-103 (MARSEARRQA…NSPEAPPLDG (103 aa)) form a disordered region. Residues 15–46 (PRAVPEERALRERRQPRPRREPLESGAGDHRR) are compositionally biased toward basic and acidic residues. Threonine 331 bears the Phosphothreonine; by MAPK1 mark. A coiled-coil region spans residues 393 to 429 (AYEELRNIELAEVQRLEEQERRHREEKERRKQQQWQV). Residues 520–606 (EGRHASVRPE…KSSKREELSQ (87 aa)) form a disordered region. Residues 547-556 (SQDQGASQAQ) are compositionally biased toward polar residues. A coiled-coil region spans residues 572–604 (ARYAERVSSQERRLAEENDELTEMRKSSKREEL). The span at 573–606 (RYAERVSSQERRLAEENDELTEMRKSSKREELSQ) shows a compositional bias: basic and acidic residues.

This sequence belongs to the flagellar radial spoke RSP3 family. As to quaternary structure, component of the axonemal radial spoke 1 (RS1) and 2 (RS2) complexes, at least composed of spoke head proteins RSPH1, RSPH3, RSPH9 and the cilia-specific component RSPH4A or sperm-specific component RSPH6A, spoke stalk proteins RSPH14, DNAJB13, DYDC1, ROPN1L and NME5, and the RS1 complex-specific anchor protein IQUB. Interacts with IQUB. Interacts with phosphorylated MAPK1. Interacts with MEK1. Interacts with PKA regulatory subunits PRKAR1A and PRKAR1B. Interacts with RSPH1. Interacts with RSPH4A. Interacts with RSPH6A. Interacts with RSPH9. Interacts with LRRC23.

It is found in the cytoplasm. The protein localises to the cytoskeleton. It localises to the cilium axoneme. The protein resides in the flagellum axoneme. Functions as part of axonemal radial spoke complexes that play an important part in the motility of sperm and cilia. Functions as a protein kinase A-anchoring protein that scaffolds the cAMP-dependent protein kinase holoenzyme. May serve as a point of convergence for MAPK and PKA signaling in cilia. The protein is Radial spoke head protein 3 homolog (RSPH3) of Bos taurus (Bovine).